The primary structure comprises 338 residues: Solute carrier family 35 member B1 homolog (338 aa).

Transmembrane regions (helical) follow at residues 9–29, 53–73, 84–104, 111–131, 135–155, 168–188, 213–233, 244–264, and 284–304; these read FVIYAVGIFVCYFLYGIVQEK, LALVWVQCLCNYVFAKVLLTI, GSYVACSLTYLLAMVSTNMAM, TAVVGKSAKPIPVMILGVLIG, YSWTRYACVLTIVLGVILFMY, TLLGEVLLFLSLSMDGLTGAV, LMLGVAMVFTGEAKEFMYFTI, LIAVCGVLGQFFIFLMVASFG, and VLLFGNVLIARQWLGAVLVFA. Residues 334 to 338 carry the Di-lysine motif motif; it reads KKLNS.

The protein belongs to the nucleotide-sugar transporter family. SLC35B subfamily.

It localises to the endoplasmic reticulum membrane. In terms of biological role, probable sugar transporter. This chain is Solute carrier family 35 member B1 homolog (meigo), found in Drosophila melanogaster (Fruit fly).